The chain runs to 272 residues: Phosphoribosylformylglycinamidine synthase subunit PurQ (272 aa).

A Glutamine amidotransferase type-1 domain is found at 8–243 (VLVMSGYGIN…SEPEYQLKKE (236 aa)). The Nucleophile role is filled by C98. Residues H225, E227, and E235 contribute to the active site.

In terms of assembly, part of the FGAM synthase complex composed of 1 PurL, 1 PurQ and 2 PurS subunits.

Its subcellular location is the cytoplasm. The enzyme catalyses N(2)-formyl-N(1)-(5-phospho-beta-D-ribosyl)glycinamide + L-glutamine + ATP + H2O = 2-formamido-N(1)-(5-O-phospho-beta-D-ribosyl)acetamidine + L-glutamate + ADP + phosphate + H(+). It catalyses the reaction L-glutamine + H2O = L-glutamate + NH4(+). The protein operates within purine metabolism; IMP biosynthesis via de novo pathway; 5-amino-1-(5-phospho-D-ribosyl)imidazole from N(2)-formyl-N(1)-(5-phospho-D-ribosyl)glycinamide: step 1/2. Functionally, part of the phosphoribosylformylglycinamidine synthase complex involved in the purines biosynthetic pathway. Catalyzes the ATP-dependent conversion of formylglycinamide ribonucleotide (FGAR) and glutamine to yield formylglycinamidine ribonucleotide (FGAM) and glutamate. The FGAM synthase complex is composed of three subunits. PurQ produces an ammonia molecule by converting glutamine to glutamate. PurL transfers the ammonia molecule to FGAR to form FGAM in an ATP-dependent manner. PurS interacts with PurQ and PurL and is thought to assist in the transfer of the ammonia molecule from PurQ to PurL. The sequence is that of Phosphoribosylformylglycinamidine synthase subunit PurQ from Methanococcus maripaludis (strain C7 / ATCC BAA-1331).